The chain runs to 32 residues: MSDIN-like toxin proprotein 3 (32 aa).

Positions 1 to 10 (MSDINATRLP) are excised as a propeptide. Positions 11 to 17 (VWIGYSP) form a cross-link, cyclopeptide (Val-Pro). Positions 18-32 (CVGDDAVALLNRGEG) are excised as a propeptide.

Belongs to the MSDIN fungal toxin family. Processed by the macrocyclase-peptidase enzyme POPB to yield a toxic cyclic heptapeptide. POPB first removes 10 residues from the N-terminus. Conformational trapping of the remaining peptide forces the enzyme to release this intermediate rather than proceed to macrocyclization. The enzyme rebinds the remaining peptide in a different conformation and catalyzes macrocyclization of the N-terminal 7 residues.

Probable toxin that belongs to the MSDIN-like toxin family responsible for a large number of food poisoning cases and deaths. This chain is MSDIN-like toxin proprotein 3, found in Amanita fuligineoides.